A 379-amino-acid polypeptide reads, in one-letter code: Ascochitine biosynthesis cluster protein 8 (379 aa).

3 helical membrane passes run 87–107 (ELIA…LDLE), 116–136 (VGPV…VAAC), and 141–161 (IKVF…VVAL).

The protein localises to the membrane. Its pathway is mycotoxin biosynthesis. Part of the gene cluster that mediates the biosynthesis of the selective antifungal agent ascochitine, an o-quinone methide that plays a possible protective role against other microbial competitors in nature and is considered to be important for pathogenicity of legume-associated Didymella species. The pathway probably begins with the synthesis of a keto-aldehyde intermediate by the ascochitine non-reducing polyketide synthase pksAC from successive condensations of 4 malonyl-CoA units, presumably with a simple acetyl-CoA starter unit. Release of the keto-aldehyde intermediate is consistent with the presence of the C-terminal reductive release domain. The HR-PKS (orf7) probably makes a diketide starter unit which is passed to the non-reducing polyketide synthase pksAC for further extension, producing ascochital and ascochitine. The aldehyde dehydrogenase (orf1), the 2-oxoglutarate-dependent dioxygenase (orf3) and the dehydrogenase (orf9) are probably involved in subsequent oxidations of methyl groups to the carboxylic acid of the heterocyclic ring. The ascochitine gene cluster also includes a gene encoding a short peptide with a cupin domain (orf2) that is often found in secondary metabolite gene clusters and which function has still to be determined. This Didymella fabae (Leaf and pod spot disease fungus) protein is Ascochitine biosynthesis cluster protein 8.